The chain runs to 581 residues: Proteasome-associated ATPase (581 aa).

Residues 1–28 (MTSSDLTQRKGLTMSDSTPDTPRSTPED) form a disordered region. The span at 14–24 (MSDSTPDTPRS) shows a compositional bias: polar residues. A coiled-coil region spans residues 27 to 66 (EDAARRLAVLSAQNERLAQVLGEARGKIVELQQQIEEFAK). Residue 248-253 (GCGKTL) participates in ATP binding. The interval 561–581 (GSGRSAAGRTIETATSTGQYL) is disordered. Positions 572-581 (ETATSTGQYL) are enriched in polar residues. The segment at 580–581 (YL) is docks into pockets in the proteasome alpha-ring.

This sequence belongs to the AAA ATPase family. Homohexamer. Assembles into a hexameric ring structure that caps the 20S proteasome core. Strongly interacts with the prokaryotic ubiquitin-like protein Pup through a hydrophobic interface; the interacting region of ARC lies in its N-terminal coiled-coil domain. There is one Pup binding site per ARC hexamer ring. Upon ATP-binding, the C-terminus of ARC interacts with the alpha-rings of the proteasome core, possibly by binding to the intersubunit pockets.

It participates in protein degradation; proteasomal Pup-dependent pathway. ATPase which is responsible for recognizing, binding, unfolding and translocation of pupylated proteins into the bacterial 20S proteasome core particle. May be essential for opening the gate of the 20S proteasome via an interaction with its C-terminus, thereby allowing substrate entry and access to the site of proteolysis. Thus, the C-termini of the proteasomal ATPase may function like a 'key in a lock' to induce gate opening and therefore regulate proteolysis. This is Proteasome-associated ATPase from Sanguibacter keddieii (strain ATCC 51767 / DSM 10542 / NCFB 3025 / ST-74).